A 56-amino-acid chain; its full sequence is Small ribosomal subunit protein uS14 (56 aa).

4 residues coordinate Zn(2+): Cys-21, Cys-24, Cys-39, and Cys-42.

This sequence belongs to the universal ribosomal protein uS14 family. Zinc-binding uS14 subfamily. Part of the 30S ribosomal subunit. Zn(2+) serves as cofactor.

In terms of biological role, binds 16S rRNA, required for the assembly of 30S particles. The chain is Small ribosomal subunit protein uS14 from Methanospirillum hungatei JF-1 (strain ATCC 27890 / DSM 864 / NBRC 100397 / JF-1).